Consider the following 309-residue polypeptide: Ribose-phosphate pyrophosphokinase (309 aa).

ATP-binding positions include 37-39 and 96-97; these read DGE and RQ. 2 residues coordinate Mg(2+): H130 and D169. K192 is an active-site residue. Residues R194, D218, and 222–226 contribute to the D-ribose 5-phosphate site; that span reads DTAGT.

It belongs to the ribose-phosphate pyrophosphokinase family. Class I subfamily. Homohexamer. Mg(2+) is required as a cofactor.

The protein resides in the cytoplasm. It catalyses the reaction D-ribose 5-phosphate + ATP = 5-phospho-alpha-D-ribose 1-diphosphate + AMP + H(+). Its pathway is metabolic intermediate biosynthesis; 5-phospho-alpha-D-ribose 1-diphosphate biosynthesis; 5-phospho-alpha-D-ribose 1-diphosphate from D-ribose 5-phosphate (route I): step 1/1. Involved in the biosynthesis of the central metabolite phospho-alpha-D-ribosyl-1-pyrophosphate (PRPP) via the transfer of pyrophosphoryl group from ATP to 1-hydroxyl of ribose-5-phosphate (Rib-5-P). This is Ribose-phosphate pyrophosphokinase from Campylobacter jejuni subsp. jejuni serotype O:2 (strain ATCC 700819 / NCTC 11168).